The chain runs to 398 residues: ATP-dependent RNA helicase eIF4A (398 aa).

A Q motif motif is present at residues 25–53; that stretch reads DSFDSMDLKPELLRGIYAYGFERPSAIQQ. The Helicase ATP-binding domain occupies 56 to 226; the sequence is IMPIIKGSDV…TKFMRDPVRI (171 aa). 69–76 is an ATP binding site; sequence AQSGTGKT. The short motif at 174 to 177 is the DEAD box element; that stretch reads DEAD. Residues 237–398 form the Helicase C-terminal domain; that stretch reads GIKQFYIAVE…EMPMNVADLI (162 aa).

This sequence belongs to the DEAD box helicase family. eIF4A subfamily. As to quaternary structure, component of the eIF4F complex, which composition varies with external and internal environmental conditions. It is composed of at least eIF4A, eIF4E and eIF4G.

The protein resides in the cytoplasm. The enzyme catalyses ATP + H2O = ADP + phosphate + H(+). ATP-dependent RNA helicase which is a subunit of the eIF4F complex involved in cap recognition and is required for mRNA binding to ribosome. In the current model of translation initiation, eIF4A unwinds RNA secondary structures in the 5'-UTR of mRNAs which is necessary to allow efficient binding of the small ribosomal subunit, and subsequent scanning for the initiator codon. This chain is ATP-dependent RNA helicase eIF4A (tif1), found in Aspergillus clavatus (strain ATCC 1007 / CBS 513.65 / DSM 816 / NCTC 3887 / NRRL 1 / QM 1276 / 107).